The sequence spans 413 residues: Bestrophin homolog 13 (413 aa).

Transmembrane regions (helical) follow at residues L29–I49, S72–A92, L236–G256, and L272–G292.

It belongs to the anion channel-forming bestrophin (TC 1.A.46) family. Calcium-sensitive chloride channel subfamily. As to quaternary structure, forms oligomers.

Its subcellular location is the cell membrane. Functionally, forms chloride channels. The protein is Bestrophin homolog 13 (best-13) of Caenorhabditis elegans.